A 459-amino-acid chain; its full sequence is NADH-ubiquinone oxidoreductase chain 4 (459 aa).

13 helical membrane passes run 22 to 42 (HLSY…LQWL), 61 to 81 (PIST…ILVS), 94 to 113 (RTFT…AFSA), 114 to 134 (LEMM…LIII), 146 to 166 (AGTY…IALT), 197 to 217 (WFAL…HLWL), 225 to 245 (PIAG…YGII), 258 to 278 (LSYP…LICL), 285 to 304 (SLIA…AALL), 308 to 330 (LSIT…LFCL), 352 to 372 (LLPL…ALPP), 380 to 400 (LTII…TGLG), and 437 to 457 (LIMM…QLMT).

Belongs to the complex I subunit 4 family.

The protein localises to the mitochondrion membrane. It catalyses the reaction a ubiquinone + NADH + 5 H(+)(in) = a ubiquinol + NAD(+) + 4 H(+)(out). Functionally, core subunit of the mitochondrial membrane respiratory chain NADH dehydrogenase (Complex I) that is believed to belong to the minimal assembly required for catalysis. Complex I functions in the transfer of electrons from NADH to the respiratory chain. The immediate electron acceptor for the enzyme is believed to be ubiquinone. The chain is NADH-ubiquinone oxidoreductase chain 4 (MT-ND4) from Pelomedusa subrufa (African side-necked turtle).